Here is a 383-residue protein sequence, read N- to C-terminus: Cobalt-precorrin-5B C(1)-methyltransferase (383 aa).

The protein belongs to the CbiD family.

It carries out the reaction Co-precorrin-5B + S-adenosyl-L-methionine = Co-precorrin-6A + S-adenosyl-L-homocysteine. Its pathway is cofactor biosynthesis; adenosylcobalamin biosynthesis; cob(II)yrinate a,c-diamide from sirohydrochlorin (anaerobic route): step 6/10. Its function is as follows. Catalyzes the methylation of C-1 in cobalt-precorrin-5B to form cobalt-precorrin-6A. The polypeptide is Cobalt-precorrin-5B C(1)-methyltransferase (Prochlorococcus marinus (strain MIT 9313)).